The following is a 255-amino-acid chain: NADPH-dependent FMN reductase ArsH (255 aa).

43 to 50 is an FMN binding site; that stretch reads SLRARSFS.

This sequence belongs to the ArsH family. As to quaternary structure, homotetramer. FMN serves as cofactor.

Functionally, has NADPH-dependent FMN reductase activity and very low azoreductase activity. No activity with NADH. This chain is NADPH-dependent FMN reductase ArsH, found in Shigella flexneri.